We begin with the raw amino-acid sequence, 196 residues long: Small ribosomal subunit protein uS4c (196 aa).

Basic residues predominate over residues 1–14; that stretch reads MSRYRGPRLKKIRR. Residues 1-43 form a disordered region; it reads MSRYRGPRLKKIRRLGALPGLTRKTPKSGSNPKKKFHSGKKEQ. Positions 89–169 constitute an S4 RNA-binding domain; sequence MRLDNILFRL…LPKHLTIDTL (81 aa).

Belongs to the universal ribosomal protein uS4 family. As to quaternary structure, part of the 30S ribosomal subunit. Contacts protein S5. The interaction surface between S4 and S5 is involved in control of translational fidelity.

Its subcellular location is the plastid. The protein resides in the chloroplast. Its function is as follows. One of the primary rRNA binding proteins, it binds directly to 16S rRNA where it nucleates assembly of the body of the 30S subunit. With S5 and S12 plays an important role in translational accuracy. In Melica uniflora (Wood melick grass), this protein is Small ribosomal subunit protein uS4c (rps4).